The chain runs to 119 residues: Large ribosomal subunit protein bL20 (119 aa).

This sequence belongs to the bacterial ribosomal protein bL20 family.

Functionally, binds directly to 23S ribosomal RNA and is necessary for the in vitro assembly process of the 50S ribosomal subunit. It is not involved in the protein synthesizing functions of that subunit. In Chloroflexus aggregans (strain MD-66 / DSM 9485), this protein is Large ribosomal subunit protein bL20.